Reading from the N-terminus, the 6629-residue chain is Replicase polyprotein 1ab (6629 aa).

Topologically, residues 1–1750 (MASSLKQGVS…VASYKTVLCK (1750 aa)) are cytoplasmic. A Ubiquitin-like 1 domain is found at 675 to 780 (KTVTFGETTV…SCHLIYRDYE (106 aa)). Residues 783–802 (DDIEEEDAEECDTDSGEAEE) form a disordered region. The Macro domain maps to 1003 to 1179 (VKPATCEKPK…YFDVTCKQKT (177 aa)). A Ubiquitin-like 2 domain is found at 1175–1227 (CKQKTIYLTEDGVKYRSIVLKPGDSLGQFGQVYAKNKIVFTADDVEDKEILYV). In terms of domain architecture, Peptidase C16 spans 1236–1497 (EYYGLDAQKY…SKSVKEDVSN (262 aa)). The active-site For PL-PRO activity is cysteine 1274. 4 residues coordinate Zn(2+): cysteine 1353, cysteine 1355, cysteine 1387, and cysteine 1390. The C4-type; degenerate zinc finger occupies 1353–1390 (CNCGIKSYELRGLEACIQPVRATNLLHFKTQYSNCPTC). Catalysis depends on for PL-PRO activity residues histidine 1437 and aspartate 1448. The chain crosses the membrane as a helical span at residues 1751–1771 (VVLATLLIVWFVYTSNPVMFT). Residues 1751–1864 (VVLATLLIVW…KPVAGFVIIC (114 aa)) are HD1. Positions 1769–1833 (MFTGIRVLDF…AYSVEQVYKD (65 aa)) constitute a 3Ecto domain. At 1772 to 1843 (GIRVLDFLFE…AASGFIFNWN (72 aa)) the chain is on the lumenal side. 2 disulfides stabilise this stretch: cysteine 1785/cysteine 1811 and cysteine 1802/cysteine 1808. A helical membrane pass occupies residues 1844–1864 (WLYLVFLILFVKPVAGFVIIC). The Cytoplasmic portion of the chain corresponds to 1865–2280 (YCVKYLVLNS…TFKCFKSYFK (416 aa)). The Y1 stretch occupies residues 1911–2001 (YIQVHHILYC…KLKRHVKPTA (91 aa)). The CoV Nsp3 Y domain occupies 1911–2263 (YIQVHHILYC…HTQKLLVEKK (353 aa)). Residues histidine 1915, cysteine 1920, cysteine 1925, cysteine 1928, cysteine 1961, histidine 1964, cysteine 1968, and cysteine 1971 each coordinate Zn(2+). The tract at residues 1915-1928 (HHILYCKDVTCEVC) is ZF1. Residues 1961 to 1971 (CKRHNWYCRNC) form a ZF2 region. The Y2 stretch occupies residues 2002–2104 (YAYHVVDEAC…ILDQALYEQL (103 aa)). Positions 2002–2263 (YAYHVVDEAC…HTQKLLVEKK (262 aa)) are coV-Y. Positions 2105 to 2163 (VVEPVSKSVIDKVCSILSSIISVDTAALNYKAGTLRDALLSITKDEEAVDMAIFCHNHD) are Y3. Positions 2164–2263 (VDYTGDGFTN…HTQKLLVEKK (100 aa)) are Y4. Residues 2281–2301 (WLLIFYILFTACCSGYYYMEV) traverse the membrane as a helical segment. An HD2 region spans residues 2281–2664 (WLLIFYILFT…LACCYLGFII (384 aa)). Topologically, residues 2302–2559 (SKSFVHPMYD…FFTGVNPNIY (258 aa)) are lumenal. Residues 2560–2580 (MQLATMFLILVVVVLIFAMVI) form a helical membrane-spanning segment. Over 2581-2611 (KFQGVFKAYATTVFITMLVWVINAFILCVHS) the chain is Cytoplasmic. A helical transmembrane segment spans residues 2612–2632 (YNSVLAVILLVLYCYASLVTS). Over 2633–2643 (RNTVIIMHCWL) the chain is Lumenal. A helical transmembrane segment spans residues 2644-2664 (VFTFGLIVPTWLACCYLGFII). Residues 2665-3096 (YMYTPLFLWC…SSFVRKATSW (432 aa)) are Cytoplasmic-facing. The 96-residue stretch at 2684-2779 (LYDGNEFVGN…RYSIGVSRLQ (96 aa)) folds into the Nsp4C domain. The 307-residue stretch at 2780–3086 (SGFKKLVSPS…FNQIGGVRLQ (307 aa)) folds into the Peptidase C30 domain. Active-site for 3CL-PRO activity residues include histidine 2820 and cysteine 2922. A helical membrane pass occupies residues 3097 to 3117 (FWSRCVLACFLFVLCAIVLFT). An HD3 region spans residues 3097–3317 (FWSRCVLACF…WLCTCYFGLY (221 aa)). The Lumenal segment spans residues 3118–3121 (AVPL). A helical transmembrane segment spans residues 3122–3142 (KFYVYAAVILLMAVLFISFTV). At 3143–3151 (KHVMAYMDT) the chain is on the cytoplasmic side. Residues 3152-3172 (FLLPTLITVIIGVCAEVPFIY) traverse the membrane as a helical segment. The Lumenal portion of the chain corresponds to 3173-3188 (NTLISQVVIFLSQWYD). A helical transmembrane segment spans residues 3189–3209 (PVVFDTMVPWMFLPLVLYTAF). At 3210-3257 (KCVQGCYMNSFNTSLLMLYQFVKLGFVIYTSSNTLTAYTEGNWELFFE) the chain is on the cytoplasmic side. Residues 3258–3278 (LVHTTVLANVSSNSLIGLFVF) form a helical membrane-spanning segment. The Lumenal segment spans residues 3279–3296 (KCAKWMLYYCNATYLNNY). Residues 3297–3317 (VLMAVMVNCIGWLCTCYFGLY) traverse the membrane as a helical segment. The Cytoplasmic portion of the chain corresponds to 3318–6629 (WWVNKVFGLT…FTSDSFVCTM (3312 aa)). The RdRp Nsp7 cofactor domain occupies 3380–3462 (AKLSDVKCTT…DILKRSTVLQ (83 aa)). Residues 3463 to 3672 (SVTQEFSHIP…GHNKVDVVLQ (210 aa)) enclose the RdRp Nsp8 cofactor domain. One can recognise a Nsp9 ssRNA-binding domain in the interval 3673 to 3783 (NNELMPHGVK…GAISNVVVLQ (111 aa)). Residues 3785-3926 (KGHETEEVDA…CDSLRQPKSS (142 aa)) form the ExoN/MTase coactivator domain. The Zn(2+) site is built by cysteine 3858, cysteine 3861, histidine 3867, cysteine 3878, cysteine 3904, cysteine 3907, cysteine 3915, and cysteine 3917. 2 zinc fingers span residues 3858–3878 (CLYC…DGRC) and 3904–3917 (CTVC…GCQC). The region spanning 3940-4198 (YLNRVRGSSE…APERYFEYDV (259 aa)) is the NiRAN domain. One can recognise a Nsp12 Interface domain in the interval 4203 to 4301 (KSYDLLKYDY…MNQDNTMSFS (99 aa)). Positions 4232, 4238, 4243, 4247, and 4424 each coordinate Zn(2+). The region spanning 4302–4868 (KMGLSQLMQF…NMYRAPTTLQ (567 aa)) is the Nsp12 RNA-dependent RNA polymerase domain. The interval 4304–4517 (GLSQLMQFVG…HQKILKSIVN (214 aa)) is rdRp Fingers N-ter. Positions 4518 to 4556 (TRNASVVIGTTKFYGGWDNMLRNLIQGVEDPILMGWDYP) are rdRp Palm N-ter. The RdRp catalytic domain maps to 4548-4710 (PILMGWDYPK…CYNNTLAKQG (163 aa)). Positions 4557–4615 (KCDRAMPNLLRIAASLVLARKHTNCCSWSERIYRLYNECAQVLSETVLATGGIYVKPGG) are rdRp Fingers C-ter. The Zn(2+) site is built by histidine 4578, cysteine 4581, and cysteine 4582. The segment at 4616-4751 (TSSGDATTAY…EKGPHEFCSQ (136 aa)) is rdRp Palm C-ter. Active-site residues include serine 4695, aspartate 4696, and aspartate 4697. Residues 4752–4868 (HTMLVEVDGE…NMYRAPTTLQ (117 aa)) are rdRp Thumb. Residues 4869–4981 (SCGVCVVCNS…DDFNQLATTN (113 aa)) enclose the CV ZBD domain. 12 residues coordinate Zn(2+): cysteine 4873, cysteine 4876, cysteine 4884, cysteine 4887, cysteine 4894, cysteine 4897, histidine 4901, histidine 4907, cysteine 4918, cysteine 4923, cysteine 4940, and histidine 4943. One can recognise a (+)RNA virus helicase ATP-binding domain in the interval 5125–5305 (MVPECFVNNI…MVCVKPDIFL (181 aa)). 5150 to 5157 (GPPGSGKS) serves as a coordination point for ATP. In terms of domain architecture, (+)RNA virus helicase C-terminal spans 5306–5477 (AKCYRCPKEI…QGTGLFKICN (172 aa)). The 215-residue stretch at 5539-5753 (MFITRDEAIR…RCLAINNAFC (215 aa)) folds into the ExoN domain. Residues aspartate 5557, glutamate 5559, and glutamate 5658 contribute to the active site. Zn(2+)-binding residues include cysteine 5674, cysteine 5676, cysteine 5692, histidine 5695, histidine 5723, cysteine 5727, and histidine 5730. Residues histidine 5734 and aspartate 5739 contribute to the active site. Cysteine 5745 serves as a coordination point for Zn(2+). Positions 5762-5989 (YPHIANEDEV…NLWKSFSALQ (228 aa)) constitute an N7-MTase domain. 5797-5803 (DIGNPKG) is an S-adenosyl-L-methionine binding site. The segment at 5877-5891 (CNGGSLYVNKHAFYT) is gpppA-binding. Zn(2+) is bound by residues cysteine 5915, cysteine 5935, cysteine 5946, and histidine 5949. In terms of domain architecture, Nsp15 N-terminal oligomerization spans 5990–6050 (SIDNIAYNMY…SVAFELYAKR (61 aa)). Residues 6051–6166 (NIRTLPNNRI…VYKRVNGAFV (116 aa)) form the AV-Nsp11N/CoV-Nsp15M domain. The region spanning 6183–6324 (EPRSDIERDF…EDGSIKTCYP (142 aa)) is the NendoU domain. Residues histidine 6212, histidine 6227, lysine 6267, lysine 6371, aspartate 6455, lysine 6499, and glutamate 6532 contribute to the active site. One can recognise a Nidovirus-type SAM-dependent 2'-O-MTase domain in the interval 6327 to 6626 (QSAWTCGYNM…NTSFTSDSFV (300 aa)).

Belongs to the coronaviruses polyprotein 1ab family. In terms of assembly, interacts with host PHB and PHB2. As to quaternary structure, interacts with papain-like protease and non-structural protein 6. Monomer. Homodimer. Only the homodimer shows catalytic activity. In terms of assembly, eight copies of nsp7 and eight copies of nsp8 assemble to form a heterohexadecamer dsRNA-encircling ring structure. As to quaternary structure, eight copies of nsp7 and eight copies of nsp8 assemble to form a heterohexadecamer dsRNA-encircling ring structure. Interacts with ORF6 protein. Homodimer. In terms of assembly, homododecamer. Interacts with proofreading exoribonuclease nsp14 and 2'-O-methyltransferase nsp16; these interactions enhance nsp14 and nsp16 enzymatic activities. As to quaternary structure, interacts with host DDX1 (via C-terminus). Interacts with non-structural protein 10. Homohexamer. In terms of assembly, interacts with non-structural protein 10. It depends on Mn(2+) as a cofactor. Zn(2+) is required as a cofactor. In terms of processing, specific enzymatic cleavages in vivo by its own proteases yield mature proteins. 3C-like proteinase nsp5 liberates nsps 6-16 from the polyprotein. Papain-like and 3C-like proteinases are autocatalytically processed. Post-translationally, N-glycosylated.

It is found in the host endoplasmic reticulum membrane. Its subcellular location is the host cytoplasm. The protein resides in the host perinuclear region. It localises to the host endoplasmic reticulum. The protein localises to the host endoplasmic reticulum-Golgi intermediate compartment. The catalysed reaction is Thiol-dependent hydrolysis of ester, thioester, amide, peptide and isopeptide bonds formed by the C-terminal Gly of ubiquitin (a 76-residue protein attached to proteins as an intracellular targeting signal).. It catalyses the reaction RNA(n) + a ribonucleoside 5'-triphosphate = RNA(n+1) + diphosphate. It carries out the reaction ATP + H2O = ADP + phosphate + H(+). The enzyme catalyses uridylyl-uridylyl-ribonucleotide-RNA = a 3'-end uridylyl-2',3'-cyclophospho-uridine-RNA + a 5'-end dephospho-ribonucleoside-RNA. The catalysed reaction is a 5'-end diphospho-ribonucleoside in mRNA + GTP + H(+) = a 5'-end (5'-triphosphoguanosine)-ribonucleoside in mRNA + diphosphate. It catalyses the reaction a 5'-end (N(7)-methyl 5'-triphosphoguanosine)-ribonucleoside in mRNA + S-adenosyl-L-methionine = a 5'-end (N(7)-methyl 5'-triphosphoguanosine)-(2'-O-methyl-ribonucleoside) in mRNA + S-adenosyl-L-homocysteine + H(+). Multifunctional protein involved in the transcription and replication of viral RNAs. Contains the proteinases responsible for the cleavages of the polyprotein. Its function is as follows. May play a role in the modulation of host cell survival signaling pathway by interacting with host PHB and PHB2. Indeed, these two proteins play a role in maintaining the functional integrity of the mitochondria and protecting cells from various stresses. In terms of biological role, responsible for the cleavages located at the N-terminus of the replicase polyprotein. In addition, PL-PRO possesses a deubiquitinating/deISGylating activity and processes both 'Lys-48'- and 'Lys-63'-linked polyubiquitin chains from cellular substrates. Functionally, plays a role in host membrane rearrangement that leads to creation of cytoplasmic double-membrane vesicles (DMV) necessary for viral replication. Alone is able to induce paired membranes. Coexpression of nsp3 and nsp4 does not result in the formation of DMVs. Responsible for the majority of cleavages as it cleaves the C-terminus of replicase polyprotein at 11 sites. Recognizes substrates containing the core sequence [ILMVF]-Q-|-[SGACN]. Inhibited by the substrate-analog Cbz-Val-Asn-Ser-Thr-Leu-Gln-CMK. Its function is as follows. Forms a hexadecamer with nsp8 (8 subunits of each) that may participate in viral replication by acting as a primase. Alternatively, may synthesize substantially longer products than oligonucleotide primers. In terms of biological role, forms a hexadecamer with nsp7 (8 subunits of each) that may participate in viral replication by acting as a primase. Alternatively, may synthesize substantially longer products than oligonucleotide primers. Functionally, forms a primer, NSP9-pU, which is utilized by the polymerase for the initiation of RNA chains. Interacts with ribosome signal recognition particle RNA (SRP). Together with NSP8, suppress protein integration into the cell membrane, thereby disrupting host immune defenses. Plays a pivotal role in viral transcription by stimulating both nsp14 3'-5' exoribonuclease and nsp16 2'-O-methyltransferase activities. Therefore plays an essential role in viral mRNAs cap methylation. Its function is as follows. RNA-directed RNA polymerase that catalyzes the transcription of viral genomic and subgenomic RNAs. Acts in complex with nsp7 and nsp8 to transcribe both the minus and positive strands of genomic RNA. The kinase-like NiRAN domain of NSP12 attaches one or more nucleotides to the amino terminus of NSP9, forming a covalent RNA-protein intermediate that serves as transcription/replication primer. Subgenomic RNAs (sgRNAs) are formed by discontinuous transcription: The polymerase has the ability to pause at transcription-regulating sequences (TRS) and jump to the leader TRS, resulting in a major deletion. This creates a series of subgenomic RNAs that are replicated, transcribed and translated. In addition, Nsp12 is a subunit of the viral RNA capping enzyme that catalyzes the RNA guanylyltransferase reaction for genomic and sub-genomic RNAs. Subsequently, the NiRAN domain transfers RNA to GDP, and forms the core cap structure GpppA-RNA. In terms of biological role, multi-functional protein with a zinc-binding domain in N-terminus displaying RNA and DNA duplex-unwinding activities with 5' to 3' polarity. Activity of helicase is dependent on magnesium. Functionally, enzyme possessing two different activities: an exoribonuclease activity acting on both ssRNA and dsRNA in a 3' to 5' direction and a N7-guanine methyltransferase activity. Acts as a proofreading exoribonuclease for RNA replication, thereby lowering The sensitivity of the virus to RNA mutagens. Plays a role in viral transcription/replication and prevents the simultaneous activation of host cell dsRNA sensors, such as MDA5/IFIH1, OAS, and PKR. Acts by degrading the 5'-polyuridines generated during replication of the poly(A) region of viral genomic and subgenomic RNAs. Catalyzes a two-step reaction in which a 2'3'-cyclic phosphate (2'3'-cP) is first generated by 2'-O transesterification, which is then hydrolyzed to a 3'-phosphate (3'-P). If not degraded, poly(U) RNA would hybridize with poly(A) RNA tails and activate host dsRNA sensors. Its function is as follows. Methyltransferase that mediates mRNA cap 2'-O-ribose methylation to the 5'-cap structure of viral mRNAs. N7-methyl guanosine cap is a prerequisite for binding of nsp16. Therefore plays an essential role in viral mRNAs cap methylation which is essential to evade immune system. In Gallus gallus (Chicken), this protein is Replicase polyprotein 1ab (rep).